We begin with the raw amino-acid sequence, 377 residues long: Probable protein phosphatase 2C 61 (377 aa).

Residues 30 to 338 (AAGEFSMAAA…DDITAVVVFL (309 aa)) enclose the PPM-type phosphatase domain. Mn(2+)-binding residues include D64, G65, D269, and D329.

It belongs to the PP2C family. Mg(2+) serves as cofactor. The cofactor is Mn(2+).

The enzyme catalyses O-phospho-L-seryl-[protein] + H2O = L-seryl-[protein] + phosphate. It carries out the reaction O-phospho-L-threonyl-[protein] + H2O = L-threonyl-[protein] + phosphate. In Oryza sativa subsp. japonica (Rice), this protein is Probable protein phosphatase 2C 61.